A 667-amino-acid chain; its full sequence is Protein adenylyltransferase SelO, mitochondrial (667 aa).

A mitochondrion-targeting transit peptide spans 1-6; the sequence is MASVRA. ATP contacts are provided by Gly154, Gly156, Lys177, Asp189, Gly190, Arg247, and Arg254. Asp341 (proton acceptor) is an active-site residue. Residues Asn342 and Asp351 each coordinate Mg(2+). Asp351 serves as a coordination point for ATP. Positions 628-652 are disordered; the sequence is YHSEEEATGPEAVARSTEEQSSYSN. At Thr635 the chain carries Phosphothreonine. Residue Ser651 is modified to Phosphoserine. A non-standard amino acid (selenocysteine) is located at residue Sec665.

Belongs to the SELO family. Mg(2+) serves as cofactor.

It localises to the mitochondrion. The enzyme catalyses L-tyrosyl-[protein] + ATP = O-(5'-adenylyl)-L-tyrosyl-[protein] + diphosphate. The catalysed reaction is L-threonyl-[protein] + ATP = 3-O-(5'-adenylyl)-L-threonyl-[protein] + diphosphate. It carries out the reaction L-seryl-[protein] + ATP = 3-O-(5'-adenylyl)-L-seryl-[protein] + diphosphate. Catalyzes the transfer of adenosine 5'-monophosphate (AMP) to Ser, Thr and Tyr residues of target proteins (AMPylation). May be a redox-active mitochondrial selenoprotein which interacts with a redox target protein. The sequence is that of Protein adenylyltransferase SelO, mitochondrial from Mus musculus (Mouse).